The chain runs to 337 residues: Tetraacyldisaccharide 4'-kinase (337 aa).

T55–T62 lines the ATP pocket.

The protein belongs to the LpxK family.

The enzyme catalyses a lipid A disaccharide + ATP = a lipid IVA + ADP + H(+). The protein operates within glycolipid biosynthesis; lipid IV(A) biosynthesis; lipid IV(A) from (3R)-3-hydroxytetradecanoyl-[acyl-carrier-protein] and UDP-N-acetyl-alpha-D-glucosamine: step 6/6. Its function is as follows. Transfers the gamma-phosphate of ATP to the 4'-position of a tetraacyldisaccharide 1-phosphate intermediate (termed DS-1-P) to form tetraacyldisaccharide 1,4'-bis-phosphate (lipid IVA). The polypeptide is Tetraacyldisaccharide 4'-kinase (Sodalis glossinidius (strain morsitans)).